Here is a 282-residue protein sequence, read N- to C-terminus: Undecaprenyl-diphosphatase (282 aa).

The next 7 membrane-spanning stretches (helical) occupy residues 40–60, 85–105, 115–135, 153–173, 193–213, 230–250, and 258–278; these read GAAFTAIIQIGTLAAVLMYFW, ARMGWMIAAGTIPIVVFGLLF, SLYWISGALIGLALLLSLAEW, IGWKEALLIGLAQSIALIPGS, AARFSFLLSLPAVFAAGIFQL, LAAATFTSAVVGYLSIAFLLS, and TIFIIYRLLAGILLLLLLSTG.

The protein belongs to the UppP family.

The protein localises to the cell inner membrane. It carries out the reaction di-trans,octa-cis-undecaprenyl diphosphate + H2O = di-trans,octa-cis-undecaprenyl phosphate + phosphate + H(+). In terms of biological role, catalyzes the dephosphorylation of undecaprenyl diphosphate (UPP). Confers resistance to bacitracin. This Chlorobium phaeovibrioides (strain DSM 265 / 1930) (Prosthecochloris vibrioformis (strain DSM 265)) protein is Undecaprenyl-diphosphatase.